We begin with the raw amino-acid sequence, 890 residues long: Genome polyprotein 2 (890 aa).

The Peptidase C6 domain maps to 135-255; that stretch reads AFNFAHGYCY…NSDLLNGIVG (121 aa). Residues Cys-143 and His-215 each act as for helper component proteinase activity in the active site. A disordered region spans residues 506-533; that stretch reads FTTSGDDDSPPPPGDSPSRPPGRSPDRV. Residues 515-528 show a composition bias toward pro residues; it reads PPPPGDSPSRPPGR. A coiled-coil region spans residues 788-816; the sequence is ELVQRSMTKLDKEIELFQAQIDSQRRAVT.

It belongs to the bymoviruses polyprotein 2 family. The viral RNA2 of bymoviruses is expressed as a single polyprotein which undergoes post-translational proteolytic processing resulting in the production of at least two individual proteins. The HC-pro cleaves its C-terminus autocatalytically (Potential).

The catalysed reaction is Hydrolyzes a Gly-|-Gly bond at its own C-terminus, commonly in the sequence -Tyr-Xaa-Val-Gly-|-Gly, in the processing of the potyviral polyprotein.. The sequence is that of Genome polyprotein 2 from Hordeum vulgare (Barley).